We begin with the raw amino-acid sequence, 215 residues long: 5'-deoxynucleotidase YGK1 (215 aa).

One can recognise an HD domain in the interval isoleucine 58–leucine 164. A divalent metal cation-binding residues include histidine 61, histidine 89, aspartate 90, glutamate 93, aspartate 98, isoleucine 99, and aspartate 159.

It belongs to the HDDC2 family. Homodimer. Mn(2+) serves as cofactor. Requires Co(2+) as cofactor. The cofactor is Mg(2+).

The enzyme catalyses a 2'-deoxyribonucleoside 5'-phosphate + H2O = a 2'-deoxyribonucleoside + phosphate. Its function is as follows. Catalyzes the dephosphorylation of the nucleoside 5'-monophosphates deoxyadenosine monophosphate (dAMP), deoxycytidine monophosphate (dCMP), deoxyguanosine monophosphate (dGMP) and deoxythymidine monophosphate (dTMP). This Saccharomyces cerevisiae (strain ATCC 204508 / S288c) (Baker's yeast) protein is 5'-deoxynucleotidase YGK1.